Consider the following 206-residue polypeptide: Cytochrome b6-f complex iron-sulfur subunit, chloroplastic (206 aa).

The N-terminal 29 residues, 1–29 (MAMLSSRRVAAPAKASAIRRSRVMPVVRA), are a transit peptide targeting the chloroplast. A helical membrane pass occupies residues 39 to 68 (MNKRNIMNLILAGGAGLPITTLALGYGAFF). A Rieske domain is found at 92–188 (AGEWLKTHLA…CDVAESGLVT (97 aa)). [2Fe-2S] cluster-binding residues include C134, H136, C152, and H155. An intrachain disulfide couples C139 to C154.

This sequence belongs to the Rieske iron-sulfur protein family. In terms of assembly, the 4 large subunits of the cytochrome b6-f complex are cytochrome b6, subunit IV (17 kDa polypeptide, petD), cytochrome f and the Rieske protein, while the 4 small subunits are petG, petL, petM and petN. The complex functions as a dimer. [2Fe-2S] cluster is required as a cofactor.

It is found in the plastid. The protein localises to the chloroplast thylakoid membrane. It carries out the reaction 2 oxidized [plastocyanin] + a plastoquinol + 2 H(+)(in) = 2 reduced [plastocyanin] + a plastoquinone + 4 H(+)(out). Functionally, component of the cytochrome b6-f complex, which mediates electron transfer between photosystem II (PSII) and photosystem I (PSI), cyclic electron flow around PSI, and state transitions. The chain is Cytochrome b6-f complex iron-sulfur subunit, chloroplastic (petC) from Chlamydomonas reinhardtii (Chlamydomonas smithii).